The primary structure comprises 183 residues: MENLIEEILKQIGEDPNREGLVKTPNRVKKAYDFLTSGYKADINQLVNGAIFEENTTGMVLVRDIEMYSLCEHHLLPFYGRAHVAYIPNKKIIGISKIPRIVDVFARRLQVQERLTDQIAQAIQETLDPLGVGVVIKAKHLCMMMRGVEKQNSELFTSSLLGLFKTDPTTRSEFLDLIRTGSH.

3 residues coordinate Zn(2+): Cys71, His74, and Cys142.

It belongs to the GTP cyclohydrolase I family. As to quaternary structure, homomer.

It catalyses the reaction GTP + H2O = 7,8-dihydroneopterin 3'-triphosphate + formate + H(+). It participates in cofactor biosynthesis; 7,8-dihydroneopterin triphosphate biosynthesis; 7,8-dihydroneopterin triphosphate from GTP: step 1/1. This chain is GTP cyclohydrolase 1, found in Leptospira biflexa serovar Patoc (strain Patoc 1 / Ames).